The sequence spans 1429 residues: Alpha-agarase (1429 aa).

A signal peptide spans 1 to 26 (MFKTKRSLLNSSIAISFAVLGVQAQA). 2 consecutive CBM6 domains span residues 29-161 (LELQ…FRLT) and 211-345 (FVIQ…LTFT). Disordered regions lie at residues 349 to 400 (SDGG…DGVS) and 474 to 495 (NTPA…GEPG). A compositionally biased stretch (polar residues) spans 369–378 (SSDSCPNTPT). The region spanning 490–638 (NGGEPGDSYY…GGTNFVHPSN (149 aa)) is the PA14 domain. In terms of domain architecture, CBM6 3 spans 662–793 (IYIQLEDFDE…QWSGDLVRLA (132 aa)).

Belongs to the glycosyl hydrolase 96 family. Homodimer. The cofactor is Ca(2+).

It carries out the reaction Endohydrolysis of 1,3-alpha-L-galactosidic linkages in agarose, yielding agarotetraose as the major product.. In terms of biological role, alpha-agarase. Does not hydrolyze agarotetraose, agarohexaose, kappa-carrageenan, iota-carrageenan or lambda-carrageenan. The protein is Alpha-agarase of Alteromonas agarilytica.